Consider the following 259-residue polypeptide: Tryptophan synthase alpha chain (259 aa).

Residues glutamate 35 and aspartate 46 each act as proton acceptor in the active site.

This sequence belongs to the TrpA family. Tetramer of two alpha and two beta chains.

The catalysed reaction is (1S,2R)-1-C-(indol-3-yl)glycerol 3-phosphate + L-serine = D-glyceraldehyde 3-phosphate + L-tryptophan + H2O. It participates in amino-acid biosynthesis; L-tryptophan biosynthesis; L-tryptophan from chorismate: step 5/5. Functionally, the alpha subunit is responsible for the aldol cleavage of indoleglycerol phosphate to indole and glyceraldehyde 3-phosphate. In Methanococcus vannielii (strain ATCC 35089 / DSM 1224 / JCM 13029 / OCM 148 / SB), this protein is Tryptophan synthase alpha chain.